A 372-amino-acid polypeptide reads, in one-letter code: Glutamate 5-kinase (372 aa).

K9 lines the ATP pocket. Positions 49, 136, and 148 each coordinate substrate. Residues 168–169 (TD) and 210–216 (TGGMKSK) each bind ATP. The 85-residue stretch at 276–360 (EGKVFIDDGA…PAIEVIHRDS (85 aa)) folds into the PUA domain.

It belongs to the glutamate 5-kinase family.

Its subcellular location is the cytoplasm. The catalysed reaction is L-glutamate + ATP = L-glutamyl 5-phosphate + ADP. The protein operates within amino-acid biosynthesis; L-proline biosynthesis; L-glutamate 5-semialdehyde from L-glutamate: step 1/2. Functionally, catalyzes the transfer of a phosphate group to glutamate to form L-glutamate 5-phosphate. In Oceanobacillus iheyensis (strain DSM 14371 / CIP 107618 / JCM 11309 / KCTC 3954 / HTE831), this protein is Glutamate 5-kinase.